Reading from the N-terminus, the 466-residue chain is FVGFKAGVKDYKLTYYTPDYETKDTDILAAFRVTPQPGVPPEEAGAAVAAESSTGTWTTVWTDGLTSLDRYKGRCYGIEPVAGEENQFIAYVAYPLDLFEEGSVTNMFTSIVGNVFGFKALRALRLEDLRIPPAYSKTFQGPPHGIQVERDKLNKYGRPLLGCTIKPKLGLSAKNYGRAVYECLRGGLDFTKDDENVNSQPFMRWRDRFLFCAEAIYKSQAETGEIKGHYLNATAGTCEEMIKRAVFARELGVPIVMHDYLTGGFTANTSLAHYCRDNGLLLHIHRAMHAVIDRQKNHGMHFRVLAKALRMSGGDHIHAGTVVGKLEGEREITLGFVDLLRDDFIEKDRSRGIYFTQDWVSMPGVLPVASGGIHVWHMPALTEIFGDDSVLQFGGGTLGHPWGNAPGAVANRVALEACVQARNEGRDLAREGNEIIREAAKWSPELAAACEVWKEIKFEFEAMDTL.

Position 5 is an N6,N6,N6-trimethyllysine (Lys-5). Residues Asn-114 and Thr-164 each coordinate substrate. The active-site Proton acceptor is the Lys-166. Substrate is bound at residue Lys-168. Residues Lys-192, Asp-194, and Glu-195 each coordinate Mg(2+). Lys-192 carries the N6-carboxylysine modification. The active-site Proton acceptor is the His-285. 3 residues coordinate substrate: Arg-286, His-318, and Ser-370.

It belongs to the RuBisCO large chain family. Type I subfamily. Heterohexadecamer of 8 large chains and 8 small chains; disulfide-linked. The disulfide link is formed within the large subunit homodimers. It depends on Mg(2+) as a cofactor. The disulfide bond which can form in the large chain dimeric partners within the hexadecamer appears to be associated with oxidative stress and protein turnover.

Its subcellular location is the plastid. It localises to the chloroplast. It carries out the reaction 2 (2R)-3-phosphoglycerate + 2 H(+) = D-ribulose 1,5-bisphosphate + CO2 + H2O. The catalysed reaction is D-ribulose 1,5-bisphosphate + O2 = 2-phosphoglycolate + (2R)-3-phosphoglycerate + 2 H(+). Functionally, ruBisCO catalyzes two reactions: the carboxylation of D-ribulose 1,5-bisphosphate, the primary event in carbon dioxide fixation, as well as the oxidative fragmentation of the pentose substrate in the photorespiration process. Both reactions occur simultaneously and in competition at the same active site. This is Ribulose bisphosphate carboxylase large chain from Saururus cernuus (Lizard's tail).